The sequence spans 119 residues: Large ribosomal subunit protein uL18 (119 aa).

This sequence belongs to the universal ribosomal protein uL18 family. As to quaternary structure, part of the 50S ribosomal subunit; part of the 5S rRNA/L5/L18/L25 subcomplex. Contacts the 5S and 23S rRNAs.

Functionally, this is one of the proteins that bind and probably mediate the attachment of the 5S RNA into the large ribosomal subunit, where it forms part of the central protuberance. This chain is Large ribosomal subunit protein uL18, found in Xanthomonas oryzae pv. oryzae (strain MAFF 311018).